The following is a 440-amino-acid chain: D-serine dehydratase (440 aa).

An N6-(pyridoxal phosphate)lysine modification is found at Lys-116.

It belongs to the serine/threonine dehydratase family. DsdA subfamily. Monomer. Pyridoxal 5'-phosphate is required as a cofactor.

The enzyme catalyses D-serine = pyruvate + NH4(+). The protein is D-serine dehydratase of Salmonella agona (strain SL483).